The sequence spans 290 residues: Homeobox protein EMX1 (290 aa).

The homeobox DNA-binding region spans P192 to K251. Positions R249–D290 are disordered. A compositionally biased stretch (basic and acidic residues) spans Q250–K263.

It belongs to the EMX homeobox family. In terms of assembly, interacts with WRD11 (via the N-terminal and the central portion of the protein); the interaction associates EMX1 with GLI3. In terms of tissue distribution, cerebral cortex.

The protein resides in the nucleus. Its subcellular location is the cytoplasm. Transcription factor, which in cooperation with EMX2, acts to generate the boundary between the roof and archipallium in the developing brain. May function in combinations with OTX1/2 to specify cell fates in the developing central nervous system. This chain is Homeobox protein EMX1, found in Homo sapiens (Human).